We begin with the raw amino-acid sequence, 115 residues long: Large ribosomal subunit protein uL22c (115 aa).

Belongs to the universal ribosomal protein uL22 family. Part of the 50S ribosomal subunit.

The protein resides in the plastid. It localises to the chloroplast. In terms of biological role, this protein binds specifically to 23S rRNA. The globular domain of the protein is located near the polypeptide exit tunnel on the outside of the subunit, while an extended beta-hairpin is found that lines the wall of the exit tunnel in the center of the 70S ribosome. This Phaeodactylum tricornutum (strain CCAP 1055/1) protein is Large ribosomal subunit protein uL22c (rpl22).